We begin with the raw amino-acid sequence, 390 residues long: Putative nickel insertion protein (390 aa).

This sequence belongs to the LarC family.

This is Putative nickel insertion protein from Geotalea uraniireducens (strain Rf4) (Geobacter uraniireducens).